The following is a 480-amino-acid chain: Sestrin-2 (480 aa).

Met-1 carries the post-translational modification N-acetylmethionine. The tract at residues Pro-20–Ser-45 is disordered. The interval Gly-66–Ser-239 is N-terminal domain; mediates the alkylhydroperoxide reductase activity. Cys-125 serves as the catalytic Cysteine sulfenic acid (-SOH) intermediate. Lys-175 is covalently cross-linked (Glycyl lysine isopeptide (Lys-Gly) (interchain with G-Cter in ubiquitin)). 2 disordered regions span residues Ala-222–Phe-252 and Leu-272–Lys-291. Position 249 is a phosphoserine (Ser-249). The segment at Pro-308–Thr-480 is C-terminal domain; mediates TORC1 regulation. L-leucine contacts are provided by residues Thr-374–Thr-377, Thr-386, and Glu-451.

It belongs to the sestrin family. As to quaternary structure, interacts with the GATOR2 complex which is composed of MIOS, SEC13, SEH1L, WDR24 and WDR59; the interaction is negatively regulated by leucine. Conveys leucine availability via direct interaction with SEH1L and WDR24 components of the GATOR2 complex. Interacts with RRAGA, RRAGB, RRAGC and RRAGD; may function as a guanine nucleotide dissociation inhibitor for RRAGs and regulate them. May interact with the TORC2 complex. Interacts with KEAP1, RBX1, SQSTM and ULK1; to regulate the degradation of KEAP1. May also associate with the complex composed of TSC1, TSC2 and the AMP-responsive protein kinase/AMPK to regulate TORC1 signaling. May interact with PRDX1. Post-translationally, phosphorylated by ULK1 at multiple sites. Ubiquitinated at Lys-175 by RNF167 via 'Lys-63'-linked polyubiquitination in response to leucine deprivation: ubiquitination promotes SESN2-interaction with the GATOR2 complex, leading to inhibit the TORC1 signaling pathway. Deubiquitinated at Lys-175 by STAMBPL1, promoting the TORC1 signaling pathway. Ubiquitinated by RNF186; ubiquitination mediates proteasomal degradation. In terms of tissue distribution, widely expressed.

The protein resides in the cytoplasm. The catalysed reaction is a hydroperoxide + L-cysteinyl-[protein] = S-hydroxy-L-cysteinyl-[protein] + an alcohol. In terms of biological role, functions as an intracellular leucine sensor that negatively regulates the mTORC1 signaling pathway through the GATOR complex. In absence of leucine, binds the GATOR subcomplex GATOR2 and prevents mTORC1 signaling. Binding of leucine to SESN2 disrupts its interaction with GATOR2 thereby activating the TORC1 signaling pathway. This stress-inducible metabolic regulator also plays a role in protection against oxidative and genotoxic stresses. May negatively regulate protein translation in response to endoplasmic reticulum stress, via mTORC1. May positively regulate the transcription by NFE2L2 of genes involved in the response to oxidative stress by facilitating the SQSTM1-mediated autophagic degradation of KEAP1. May also mediate TP53 inhibition of TORC1 signaling upon genotoxic stress. Moreover, may prevent the accumulation of reactive oxygen species (ROS) through the alkylhydroperoxide reductase activity born by the N-terminal domain of the protein. Was originally reported to contribute to oxidative stress resistance by reducing PRDX1. However, this could not be confirmed. The chain is Sestrin-2 from Homo sapiens (Human).